The primary structure comprises 534 residues: Peptide chain release factor 3 (534 aa).

The 270-residue stretch at 9–278 folds into the tr-type G domain; it reads SRRRTFAIIS…FFVEHAPSPQ (270 aa). Residues 18–25, 86–90, and 140–143 each bind GTP; these read SHPDAGKT, DTPGH, and NKLD.

This sequence belongs to the TRAFAC class translation factor GTPase superfamily. Classic translation factor GTPase family. PrfC subfamily.

It localises to the cytoplasm. Functionally, increases the formation of ribosomal termination complexes and stimulates activities of RF-1 and RF-2. It binds guanine nucleotides and has strong preference for UGA stop codons. It may interact directly with the ribosome. The stimulation of RF-1 and RF-2 is significantly reduced by GTP and GDP, but not by GMP. The protein is Peptide chain release factor 3 of Stenotrophomonas maltophilia (strain K279a).